A 90-amino-acid chain; its full sequence is MALDTAQKAQIVAKFARKEKDTGSSEVQIALLSARIDSITEHMQNNPKDFSSRLGLLKLVGQRKRLMKYLKSTNYGAYSKLVNELNLKDK.

It belongs to the universal ribosomal protein uS15 family. As to quaternary structure, part of the 30S ribosomal subunit. Forms a bridge to the 50S subunit in the 70S ribosome, contacting the 23S rRNA.

One of the primary rRNA binding proteins, it binds directly to 16S rRNA where it helps nucleate assembly of the platform of the 30S subunit by binding and bridging several RNA helices of the 16S rRNA. In terms of biological role, forms an intersubunit bridge (bridge B4) with the 23S rRNA of the 50S subunit in the ribosome. This chain is Small ribosomal subunit protein uS15, found in Campylobacter hominis (strain ATCC BAA-381 / DSM 21671 / CCUG 45161 / LMG 19568 / NCTC 13146 / CH001A).